The sequence spans 240 residues: Uridylate kinase (240 aa).

12 to 15 contacts ATP; the sequence is KLSG. The involved in allosteric activation by GTP stretch occupies residues 20–25; sequence GEKGFG. Gly-54 is a UMP binding site. The ATP site is built by Gly-55 and Arg-59. UMP is bound by residues Asp-74 and 135–142; that span reads TGSPYFST. ATP contacts are provided by Asn-163, Tyr-169, and Asp-172.

It belongs to the UMP kinase family. Homohexamer.

The protein resides in the cytoplasm. The enzyme catalyses UMP + ATP = UDP + ADP. It participates in pyrimidine metabolism; CTP biosynthesis via de novo pathway; UDP from UMP (UMPK route): step 1/1. Allosterically activated by GTP. Inhibited by UTP. In terms of biological role, catalyzes the reversible phosphorylation of UMP to UDP. The protein is Uridylate kinase of Limosilactobacillus reuteri (Lactobacillus reuteri).